A 269-amino-acid chain; its full sequence is HTH-type transcriptional activator ArnR1 (269 aa).

The Cytoplasmic segment spans residues 1–217; the sequence is MSSMNKRVFD…LLKLTGSYRY (217 aa). A DNA-binding region (H-T-H motif) is located at residues 42–65; that stretch reads TTEISQTINTSRKSIIDAIRKLVD. Residues 218–238 form a helical membrane-spanning segment; it reads EIALTKVMLFNVISIPVLMYL. Residues 239-241 lie on the Extracellular side of the membrane; it reads KDQ. The chain crosses the membrane as a helical span at residues 242-262; it reads LGILEAIWLYVIILLPLLSIF. Residues 263 to 269 are Cytoplasmic-facing; that stretch reads AEIFNRI.

The protein localises to the cell membrane. In terms of biological role, involved in regulation of archaellar gene expression. May activate flaB transcription upon nutrient starvation by acting on the flaB promoter. This chain is HTH-type transcriptional activator ArnR1, found in Sulfolobus acidocaldarius (strain ATCC 33909 / DSM 639 / JCM 8929 / NBRC 15157 / NCIMB 11770).